Here is a 231-residue protein sequence, read N- to C-terminus: Large ribosomal subunit protein uL1 (231 aa).

The protein belongs to the universal ribosomal protein uL1 family. As to quaternary structure, part of the 50S ribosomal subunit.

In terms of biological role, binds directly to 23S rRNA. The L1 stalk is quite mobile in the ribosome, and is involved in E site tRNA release. Functionally, protein L1 is also a translational repressor protein, it controls the translation of the L11 operon by binding to its mRNA. The chain is Large ribosomal subunit protein uL1 from Stutzerimonas stutzeri (strain A1501) (Pseudomonas stutzeri).